The chain runs to 85 residues: Large ribosomal subunit protein bL27 (85 aa).

Residues 1 to 22 (MAHKKGQGSSRNGRDSPGQHRG) are disordered.

Belongs to the bacterial ribosomal protein bL27 family.

In Anaeromyxobacter sp. (strain Fw109-5), this protein is Large ribosomal subunit protein bL27.